We begin with the raw amino-acid sequence, 131 residues long: Histone H2A.2 (131 aa).

The tract at residues 1–22 (MSGGKGKAGSSEKASTSRSAKA) is disordered. Residue S2 is modified to N-acetylserine. N6-acetyllysine is present on residues K5 and K7. Position 105 is an N5-methylglutamine (Q105). Residue K126 forms a Glycyl lysine isopeptide (Lys-Gly) (interchain with G-Cter in SUMO) linkage. Position 128 is a phosphoserine (S128). A [ST]-Q motif motif is present at residues 128 to 129 (SQ).

Belongs to the histone H2A family. The nucleosome is a histone octamer containing two molecules each of H2A, H2B, H3 and H4 assembled in one H3-H4 heterotetramer and two H2A-H2B heterodimers. The octamer wraps approximately 147 bp of DNA. In terms of processing, phosphorylated to form H2AS128ph (gamma-H2A) in response to DNA double-strand breaks (DSBs) generated by exogenous genotoxic agents and by stalled replication forks. Phosphorylation is dependent on the DNA damage checkpoint kinases MEC1/ATR and TEL1/ATM, spreads on either side of a detected DSB site and may mark the surrounding chromatin for recruitment of proteins required for DNA damage signaling and repair. Gamma-H2A is removed from the DNA prior to the strand invasion-primer extension step of the repair process and subsequently dephosphorylated. Dephosphorylation is necessary for efficient recovery from the DNA damage checkpoint. Post-translationally, acetylated by ESA1 to form H2AK4ac and H2AK7ac.

The protein localises to the nucleus. Its subcellular location is the chromosome. Its function is as follows. Core component of nucleosome which plays a central role in DNA double strand break (DSB) repair. Nucleosomes wrap and compact DNA into chromatin, limiting DNA accessibility to the cellular machineries which require DNA as a template. Histones thereby play a central role in transcription regulation, DNA repair, DNA replication and chromosomal stability. DNA accessibility is regulated via a complex set of post-translational modifications of histones, also called histone code, and nucleosome remodeling. The sequence is that of Histone H2A.2 (HTA2) from Scheffersomyces stipitis (strain ATCC 58785 / CBS 6054 / NBRC 10063 / NRRL Y-11545) (Yeast).